We begin with the raw amino-acid sequence, 252 residues long: Type I iodothyronine deiodinase (252 aa).

The Extracellular portion of the chain corresponds to 1 to 17; sequence MESLLQTIKLMLRYIQK. A helical; Signal-anchor for type III membrane protein membrane pass occupies residues 18–38; the sequence is ALILFFLFLYVVVGKVLMFLF. The Cytoplasmic portion of the chain corresponds to 39–252; the sequence is PQTMASVLKS…EVCSVLEKKK (214 aa). Residue selenocysteine 130 is part of the active site. Selenocysteine 130 is a non-standard amino acid (selenocysteine).

This sequence belongs to the iodothyronine deiodinase family. In terms of assembly, predominantly monomer. Can form homodimers but homodimerization is not essential for enzyme activity.

Its subcellular location is the cell membrane. The protein resides in the endoplasmic reticulum membrane. It is found in the basolateral cell membrane. The enzyme catalyses 3,3',5-triiodo-L-thyronine + iodide + A + H(+) = L-thyroxine + AH2. The catalysed reaction is 3,3',5'-triiodo-L-thyronine + iodide + A + H(+) = L-thyroxine + AH2. It catalyses the reaction 3,3'-diiodo-L-thyronine + iodide + A + H(+) = 3,3',5'-triiodo-L-thyronine + AH2. It carries out the reaction 3,3'-diiodo-L-thyronine + iodide + A + H(+) = 3,3',5-triiodo-L-thyronine + AH2. The enzyme catalyses 3'-iodo-L-thyronine + iodide + A + H(+) = 3',5'-diiodo-L-thyronine + AH2. The catalysed reaction is 3-iodo-L-thyronine + iodide + A + H(+) = 3,5-diiodo-L-thyronine + AH2. It catalyses the reaction 3-iodo-L-thyronine + iodide + A + H(+) = 3,3'-diiodo-L-thyronine + AH2. It carries out the reaction 3,3'-diiodothyronamine + iodide + A + H(+) = 3,3',5'-triiodothyronamine + AH2. The enzyme catalyses 3'-iodothyronamine + iodide + A + H(+) = 3',5'-diiodothyronamine + AH2. The catalysed reaction is 3-iodothyronamine + iodide + A + H(+) = 3,3'-diiodothyronamine + AH2. It catalyses the reaction 3,3'-diiodothyronamine + iodide + A + H(+) = 3,3',5-triiodothyronamine + AH2. It carries out the reaction 3-iodothyronamine + iodide + A + H(+) = 3,5-diiodothyronamine + AH2. The enzyme catalyses 3,3'-diiodo-L-thyronine sulfate + iodide + A + H(+) = 3,3',5'-triiodo-L-thyronine sulfate + AH2. The catalysed reaction is 3,3',5'-triiodo-L-thyronine sulfate + iodide + A + H(+) = L-thyroxine sulfate + AH2. It catalyses the reaction 3,3'-diiodo-L-thyronine sulfate + iodide + A + H(+) = 3,3',5-triiodo-L-thyronine sulfate + AH2. Its activity is regulated as follows. Lacks sensitivity to 6-n-propylthiouracil. In terms of biological role, plays a crucial role in the metabolism of thyroid hormones (TH) and has specific roles in TH activation and inactivation by deiodination. Catalyzes the deiodination of L-thyroxine (T4) to 3,5,3'-triiodothyronine (T3) and 3,3',5'-triiodothyronine (rT3) to 3,3'-diiodothyronine (3,3'-T2) via outer-ring deiodination (ORD). Catalyzes the deiodiantion of T4 to rT3 and T3 to 3,3'-T2 via inner-ring deiodination (IRD). Catalyzes the deiodination of 3',5'-diiodothyronine (3',5'-T2) to 3'-monoiodothyronine (3'-T1) via ORD. Catalyzes the deiodination of 3,5-diiodothyronine (3,5-T2) to 3-monoiodothyronine (3-T1) and 3,3'-T2 to 3-T1 via IRD. Catalyzes the phenolic ring deiodinations of 3,3',5'-triiodothyronamine, 3',5'-diiodothyronamine and 3,3'-diiodothyronamine as well as tyrosyl ring deiodinations of 3,5,3'-triiodothyronamine and 3,5-diiodothyronamine. Catalyzes the deiodination of L-thyroxine sulfate and 3,3',5-triiodo-L-thyronine sulfate via IRD and of 3,3',5'-triiodo-L-thyronine sulfate via ORD. The chain is Type I iodothyronine deiodinase (dio1) from Xenopus laevis (African clawed frog).